Reading from the N-terminus, the 486-residue chain is Cytosol aminopeptidase (486 aa).

2 residues coordinate Zn(2+): K249 and D254. K261 is a catalytic residue. Zn(2+) is bound by residues D272, D331, and E333. R335 is an active-site residue.

This sequence belongs to the peptidase M17 family. In terms of assembly, homohexamer. Requires Zn(2+) as cofactor.

Its subcellular location is the cytoplasm. The catalysed reaction is Release of an N-terminal amino acid, Xaa-|-Yaa-, in which Xaa is preferably Leu, but may be other amino acids including Pro although not Arg or Lys, and Yaa may be Pro. Amino acid amides and methyl esters are also readily hydrolyzed, but rates on arylamides are exceedingly low.. It carries out the reaction Release of N-terminal proline from a peptide.. Its function is as follows. Presumably involved in the processing and regular turnover of intracellular proteins. Catalyzes the removal of unsubstituted N-terminal amino acids from various peptides. The protein is Cytosol aminopeptidase of Encephalitozoon cuniculi (strain GB-M1) (Microsporidian parasite).